Reading from the N-terminus, the 841-residue chain is Probable inorganic carbon transporter subunit DabA 1 (841 aa).

Positions 352, 354, 536, and 551 each coordinate Zn(2+).

It belongs to the inorganic carbon transporter (TC 9.A.2) DabA family. Forms a complex with DabB. Zn(2+) serves as cofactor.

Its subcellular location is the cell inner membrane. Part of an energy-coupled inorganic carbon pump. The sequence is that of Probable inorganic carbon transporter subunit DabA 1 from Bradyrhizobium sp. (strain ORS 278).